Consider the following 409-residue polypeptide: Fructose-1,6-bisphosphatase, chloroplastic (409 aa).

Residues 1–49 (MAAATTTTSRPLLLSRQQAAASSLQCRLPRRPGSSLFAGQGQASTPNVR) constitute a chloroplast transit peptide. Glutamate 131, glutamate 160, aspartate 181, leucine 183, and aspartate 184 together coordinate Mg(2+). 184-187 (DGSS) lines the substrate pocket. A disulfide bond links cysteine 223 and cysteine 228. Substrate contacts are provided by asparagine 287, tyrosine 319, tyrosine 337, tyrosine 339, and lysine 349. Glutamate 355 is a binding site for Mg(2+).

This sequence belongs to the FBPase class 1 family. Homotetramer. Requires Mg(2+) as cofactor. In terms of tissue distribution, in photosynthetically active tissues, and in the shoot and root apical meristems.

Its subcellular location is the plastid. The protein resides in the chloroplast. The catalysed reaction is beta-D-fructose 1,6-bisphosphate + H2O = beta-D-fructose 6-phosphate + phosphate. It functions in the pathway carbohydrate biosynthesis; Calvin cycle. The sequence is that of Fructose-1,6-bisphosphatase, chloroplastic (FBP) from Triticum aestivum (Wheat).